The chain runs to 507 residues: ATP synthase subunit alpha (507 aa).

168–175 (GDRQTGKT) is a binding site for ATP.

This sequence belongs to the ATPase alpha/beta chains family. In terms of assembly, F-type ATPases have 2 components, CF(1) - the catalytic core - and CF(0) - the membrane proton channel. CF(1) has five subunits: alpha(3), beta(3), gamma(1), delta(1), epsilon(1). CF(0) has three main subunits: a(1), b(2) and c(9-12). The alpha and beta chains form an alternating ring which encloses part of the gamma chain. CF(1) is attached to CF(0) by a central stalk formed by the gamma and epsilon chains, while a peripheral stalk is formed by the delta and b chains.

The protein localises to the cell membrane. The catalysed reaction is ATP + H2O + 4 H(+)(in) = ADP + phosphate + 5 H(+)(out). Functionally, produces ATP from ADP in the presence of a proton gradient across the membrane. The alpha chain is a regulatory subunit. The chain is ATP synthase subunit alpha from Mesomycoplasma hyopneumoniae (strain J / ATCC 25934 / NCTC 10110) (Mycoplasma hyopneumoniae).